The chain runs to 238 residues: uncharacterized protein (238 aa).

Transmembrane regions (helical) follow at residues 22 to 42 (VYGW…GLYA), 49 to 69 (LFSL…YIQA), 78 to 98 (AVMG…GTMV), 105 to 125 (FGGG…GLSA), 141 to 161 (ILML…VVSL), 166 to 186 (PLMY…LTVV), and 208 to 228 (LSLI…WYLL).

Belongs to the BI1 family.

Its subcellular location is the cell membrane. This is an uncharacterized protein from Chlamydia muridarum (strain MoPn / Nigg).